Consider the following 369-residue polypeptide: Opsin Rh6 (369 aa).

Over Met1 to Trp46 the chain is Extracellular. N-linked (GlcNAc...) asparagine glycosylation is present at Asn17. The helical transmembrane segment at Phe47 to Ile71 threads the bilayer. The Cytoplasmic portion of the chain corresponds to Phe72–Asn83. The helical transmembrane segment at Met84–Phe109 threads the bilayer. Over Tyr110–Tyr123 the chain is Extracellular. Cys120 and Cys197 are disulfide-bonded. The helical transmembrane segment at Gly124–Tyr143 threads the bilayer. Over Asp144–Ala162 the chain is Cytoplasmic. A helical membrane pass occupies residues Ala163–Asn186. Over Arg187–Ser210 the chain is Extracellular. Residues Asn193 and Asn208 are each glycosylated (N-linked (GlcNAc...) asparagine). A helical membrane pass occupies residues Tyr211 to Val238. The Cytoplasmic portion of the chain corresponds to Ala239–Lys274. Residues Val275–Ile298 form a helical membrane-spanning segment. Residues Phe299–Ser305 lie on the Extracellular side of the membrane. A helical membrane pass occupies residues Pro306–Ser330. Lys317 is modified (N6-(retinylidene)lysine). Topologically, residues His331–Ala369 are cytoplasmic.

The protein belongs to the G-protein coupled receptor 1 family. Opsin subfamily. Phosphorylated on some or all of the serine and threonine residues present in the C-terminal region. As to expression, each Drosophila eye is composed of 800 facets or ommatidia. Each ommatidium contains 8 photoreceptor cells (R1-R8), the R1 to R6 cells are outer cells, while R7 and R8 are inner cells. Rh6 is expressed in a subset of R8 cells, most likely expressed in the subset of R8 cells paired with Rh4-expressing R7 cells (R7y).

It localises to the membrane. In terms of biological role, visual pigments are the light-absorbing molecules that mediate vision. They consist of an apoprotein, opsin, covalently linked to cis-retinal. This is Opsin Rh6 (Rh6) from Drosophila melanogaster (Fruit fly).